We begin with the raw amino-acid sequence, 145 residues long: D-aminoacyl-tRNA deacylase (145 aa).

Positions 137–138 (GP) match the Gly-cisPro motif, important for rejection of L-amino acids motif.

This sequence belongs to the DTD family. Homodimer.

It localises to the cytoplasm. The enzyme catalyses glycyl-tRNA(Ala) + H2O = tRNA(Ala) + glycine + H(+). It catalyses the reaction a D-aminoacyl-tRNA + H2O = a tRNA + a D-alpha-amino acid + H(+). In terms of biological role, an aminoacyl-tRNA editing enzyme that deacylates mischarged D-aminoacyl-tRNAs. Also deacylates mischarged glycyl-tRNA(Ala), protecting cells against glycine mischarging by AlaRS. Acts via tRNA-based rather than protein-based catalysis; rejects L-amino acids rather than detecting D-amino acids in the active site. By recycling D-aminoacyl-tRNA to D-amino acids and free tRNA molecules, this enzyme counteracts the toxicity associated with the formation of D-aminoacyl-tRNA entities in vivo and helps enforce protein L-homochirality. The protein is D-aminoacyl-tRNA deacylase of Salmonella paratyphi A (strain AKU_12601).